The chain runs to 491 residues: UDP-N-acetylmuramate--L-alanine ligase (491 aa).

Residue 126–132 (GTHGKTT) participates in ATP binding.

The protein belongs to the MurCDEF family.

The protein localises to the cytoplasm. It carries out the reaction UDP-N-acetyl-alpha-D-muramate + L-alanine + ATP = UDP-N-acetyl-alpha-D-muramoyl-L-alanine + ADP + phosphate + H(+). It functions in the pathway cell wall biogenesis; peptidoglycan biosynthesis. Functionally, cell wall formation. This is UDP-N-acetylmuramate--L-alanine ligase from Yersinia pestis (strain Pestoides F).